Here is a 247-residue protein sequence, read N- to C-terminus: MTNIWFDVAEVSVGQHWYWQLGGYSLHGQVLITSWIVVAVIGVICLLGTQNLQPVSGGSAATAPKGLQNLTEYITEFIRDLAKTQIGEEDYLKWVPFLGTIFLFIFVSNWSGALIPWRILELPNGELAAPTNDINTTVALALLTSIAYFYAGISKKGLGYFKRYISPAAFLLPINILEDLTKPLSLSFRLFGNILADELVVGVLVSLVPLVVPIPIMLLGLFTSAIQALVFATLAGAYIGESVEDHH.

5 helical membrane-spanning segments follow: residues 28-48, 95-115, 134-154, 199-219, and 220-240; these read GQVL…CLLG, VPFL…GALI, INTT…AGIS, LVVG…IMLL, and GLFT…AYIG.

It belongs to the ATPase A chain family. F-type ATPases have 2 components, CF(1) - the catalytic core - and CF(0) - the membrane proton channel. CF(1) has five subunits: alpha(3), beta(3), gamma(1), delta(1), epsilon(1). CF(0) has four main subunits: a, b, b' and c.

The protein resides in the plastid. The protein localises to the chloroplast thylakoid membrane. Key component of the proton channel; it plays a direct role in the translocation of protons across the membrane. This is ATP synthase subunit a, chloroplastic from Chlorella vulgaris (Green alga).